The following is a 344-amino-acid chain: Transcription factor HHO3 (344 aa).

Disordered stretches follow at residues 90-122 (KWSS…DKKK) and 156-212 (AFQP…KQRR). Acidic residues predominate over residues 97-106 (DETDKDEEAE). Positions 178 to 188 (TPTSTTTTSST) are enriched in low complexity. One can recognise an HTH myb-type domain in the interval 206–266 (SNRKQRRCWS…HLQKYRLHTR (61 aa)). The H-T-H motif DNA-binding region spans 237–262 (PKQIRDLMKVDGLTNDEVKSHLQKYR). Residues 306–344 (PVATQPPQSSTSGERSNRGCKSPATSSTTTHTPHLLPLS) form a disordered region. The segment covering 310-319 (QPPQSSTSGE) has biased composition (polar residues). Low complexity predominate over residues 330–344 (TSSTTTHTPHLLPLS).

The protein localises to the nucleus. Its function is as follows. Probable transcription factor involved in phosphate signaling in roots. The chain is Transcription factor HHO3 from Arabidopsis thaliana (Mouse-ear cress).